The chain runs to 294 residues: Acetylglutamate kinase (294 aa).

Substrate is bound by residues 60 to 61, arginine 82, and asparagine 186; that span reads GG.

The protein belongs to the acetylglutamate kinase family. ArgB subfamily.

It is found in the cytoplasm. The catalysed reaction is N-acetyl-L-glutamate + ATP = N-acetyl-L-glutamyl 5-phosphate + ADP. It functions in the pathway amino-acid biosynthesis; L-arginine biosynthesis; N(2)-acetyl-L-ornithine from L-glutamate: step 2/4. Functionally, catalyzes the ATP-dependent phosphorylation of N-acetyl-L-glutamate. The sequence is that of Acetylglutamate kinase from Methanospirillum hungatei JF-1 (strain ATCC 27890 / DSM 864 / NBRC 100397 / JF-1).